The sequence spans 97 residues: Small ribosomal subunit protein bS20 (97 aa).

This sequence belongs to the bacterial ribosomal protein bS20 family.

Binds directly to 16S ribosomal RNA. The polypeptide is Small ribosomal subunit protein bS20 (Prochlorococcus marinus (strain MIT 9301)).